Reading from the N-terminus, the 254-residue chain is PF03932 family protein CutC (254 aa).

Belongs to the CutC family.

Its subcellular location is the cytoplasm. This Yersinia pestis bv. Antiqua (strain Angola) protein is PF03932 family protein CutC.